A 453-amino-acid polypeptide reads, in one-letter code: MSPQTETKAGVGFKAGVKEYKLTYYTPEYETKDTDILAAFRVTPQPGVPPEERGDAVAAESSTGTWTTVWTDGLTSLDRYKGRCYHIEPVPGEEDQFIAYVAYPLDLFEEGSVTNMFTSIVGNVFGFKALRALRLEDLRIPVAYVKTFQGPPHGIQVERDKLNKYGRPLLGCTIKPKLGLSAKNYGRAVYECLRGGLDFTKDDENVNSQPFMRWRDRFLFCAEAIYKSQAETGEIKGHYLNATAGTCEEMIKRAVFARELGVPIVMHDYLTGGFTANTSLSHYCRDNGLLLHIHRAMHAVIDRQKNHGMHFRVLAKALRMSGGDHIHSGTVVGKLEGERDITLGFVDLLRDDYIEQDRSRGIYFTQDWVSLPGVLPVASRGIHVWHMPALTEIFGDDSVLQFGGGTLGHPWGNAPGAVANRVALEACVKARNEGRDLAAEGGEIIREACKWSP.

Residues 1 to 2 (MS) constitute a propeptide that is removed on maturation. Pro-3 is modified (N-acetylproline). Lys-14 carries the N6,N6,N6-trimethyllysine modification. Residues Asn-123 and Thr-173 each coordinate substrate. Residue Lys-175 is the Proton acceptor of the active site. Lys-177 is a binding site for substrate. Mg(2+) is bound by residues Lys-201, Asp-203, and Glu-204. Lys-201 carries the post-translational modification N6-carboxylysine. His-294 acts as the Proton acceptor in catalysis. Substrate-binding residues include Arg-295, His-327, and Ser-379.

This sequence belongs to the RuBisCO large chain family. Type I subfamily. As to quaternary structure, heterohexadecamer of 8 large chains and 8 small chains; disulfide-linked. The disulfide link is formed within the large subunit homodimers. It depends on Mg(2+) as a cofactor. Post-translationally, the disulfide bond which can form in the large chain dimeric partners within the hexadecamer appears to be associated with oxidative stress and protein turnover.

Its subcellular location is the plastid. It localises to the chloroplast. The enzyme catalyses 2 (2R)-3-phosphoglycerate + 2 H(+) = D-ribulose 1,5-bisphosphate + CO2 + H2O. It carries out the reaction D-ribulose 1,5-bisphosphate + O2 = 2-phosphoglycolate + (2R)-3-phosphoglycerate + 2 H(+). RuBisCO catalyzes two reactions: the carboxylation of D-ribulose 1,5-bisphosphate, the primary event in carbon dioxide fixation, as well as the oxidative fragmentation of the pentose substrate in the photorespiration process. Both reactions occur simultaneously and in competition at the same active site. The sequence is that of Ribulose bisphosphate carboxylase large chain from Crucianella angustifolia (Narrow-leaved crosswort).